The following is a 217-amino-acid chain: 2-C-methyl-D-erythritol 4-phosphate cytidylyltransferase (217 aa).

It belongs to the IspD/TarI cytidylyltransferase family. IspD subfamily.

It catalyses the reaction 2-C-methyl-D-erythritol 4-phosphate + CTP + H(+) = 4-CDP-2-C-methyl-D-erythritol + diphosphate. It participates in isoprenoid biosynthesis; isopentenyl diphosphate biosynthesis via DXP pathway; isopentenyl diphosphate from 1-deoxy-D-xylulose 5-phosphate: step 2/6. In terms of biological role, catalyzes the formation of 4-diphosphocytidyl-2-C-methyl-D-erythritol from CTP and 2-C-methyl-D-erythritol 4-phosphate (MEP). This chain is 2-C-methyl-D-erythritol 4-phosphate cytidylyltransferase, found in Chlamydia abortus (strain DSM 27085 / S26/3) (Chlamydophila abortus).